Here is a 315-residue protein sequence, read N- to C-terminus: Methionyl-tRNA formyltransferase (315 aa).

110–113 (SLLP) provides a ligand contact to (6S)-5,6,7,8-tetrahydrofolate.

The protein belongs to the Fmt family.

It carries out the reaction L-methionyl-tRNA(fMet) + (6R)-10-formyltetrahydrofolate = N-formyl-L-methionyl-tRNA(fMet) + (6S)-5,6,7,8-tetrahydrofolate + H(+). Attaches a formyl group to the free amino group of methionyl-tRNA(fMet). The formyl group appears to play a dual role in the initiator identity of N-formylmethionyl-tRNA by promoting its recognition by IF2 and preventing the misappropriation of this tRNA by the elongation apparatus. This Mycolicibacterium paratuberculosis (strain ATCC BAA-968 / K-10) (Mycobacterium paratuberculosis) protein is Methionyl-tRNA formyltransferase.